A 249-amino-acid chain; its full sequence is Leucyl/phenylalanyl-tRNA--protein transferase (249 aa).

Belongs to the L/F-transferase family.

It is found in the cytoplasm. It catalyses the reaction N-terminal L-lysyl-[protein] + L-leucyl-tRNA(Leu) = N-terminal L-leucyl-L-lysyl-[protein] + tRNA(Leu) + H(+). The enzyme catalyses N-terminal L-arginyl-[protein] + L-leucyl-tRNA(Leu) = N-terminal L-leucyl-L-arginyl-[protein] + tRNA(Leu) + H(+). The catalysed reaction is L-phenylalanyl-tRNA(Phe) + an N-terminal L-alpha-aminoacyl-[protein] = an N-terminal L-phenylalanyl-L-alpha-aminoacyl-[protein] + tRNA(Phe). Functionally, functions in the N-end rule pathway of protein degradation where it conjugates Leu, Phe and, less efficiently, Met from aminoacyl-tRNAs to the N-termini of proteins containing an N-terminal arginine or lysine. In Cupriavidus metallidurans (strain ATCC 43123 / DSM 2839 / NBRC 102507 / CH34) (Ralstonia metallidurans), this protein is Leucyl/phenylalanyl-tRNA--protein transferase.